Reading from the N-terminus, the 238-residue chain is Acyl-protein thioesterase 1 (238 aa).

Active-site charge relay system residues include Ser120, Asp174, and His219.

Belongs to the AB hydrolase superfamily. AB hydrolase 2 family.

It is found in the cytoplasm. It localises to the nucleus. It carries out the reaction S-hexadecanoyl-L-cysteinyl-[protein] + H2O = L-cysteinyl-[protein] + hexadecanoate + H(+). Hydrolyzes fatty acids from S-acylated cysteine residues in proteins with a strong preference for palmitoylated G-alpha proteins over other acyl substrates. Mediates the deacylation of G-alpha proteins such as GPA1 in vivo, but has weak or no activity toward palmitoylated Ras proteins. Has weak lysophospholipase activity in vitro; however such activity may not exist in vivo. The protein is Acyl-protein thioesterase 1 of Cryptococcus neoformans var. neoformans serotype D (strain B-3501A) (Filobasidiella neoformans).